The primary structure comprises 213 residues: Histone H1.3 (213 aa).

Ser-1 is modified (N-acetylserine). The span at 1-15 (SEAPAETAAPAPAEK) shows a compositional bias: low complexity. The segment at 1-41 (SEAPAETAAPAPAEKSPAKKKKAAKKPGAGAAKRKAAGPPV) is disordered. An N6-acetyllysine modification is found at Lys-15. An N6-(beta-hydroxybutyryl)lysine mark is found at Lys-35 and Lys-53. An H15 domain is found at 37 to 110 (AGPPVSELIT…GASGSFKLDK (74 aa)). At Arg-55 the chain carries Citrulline. 3 positions are modified to N6-(beta-hydroxybutyryl)lysine: Lys-65, Lys-86, and Lys-91. Residues 92–213 (GTLVETKGTG…AKKTAAKKKK (122 aa)) are disordered. Ser-105 is subject to Phosphoserine. Lys-107 carries the N6-(beta-hydroxybutyryl)lysine modification. Positions 107–119 (KLDKKAASGEAKP) are enriched in basic and acidic residues. Composition is skewed to basic residues over residues 120–131 (KPKKAGAAKPKK), 138–170 (KKPK…KVAK), and 179–213 (KSPK…KKKK).

Belongs to the histone H1/H5 family. In terms of processing, H1 histones are progressively phosphorylated during the cell cycle, becoming maximally phosphorylated during late G2 phase and M phase, and being dephosphorylated sharply thereafter. Post-translationally, citrullination at Arg-55 (H1R54ci) by PADI4 takes place within the DNA-binding site of H1 and results in its displacement from chromatin and global chromatin decondensation, thereby promoting pluripotency and stem cell maintenance.

It localises to the nucleus. Its subcellular location is the chromosome. In terms of biological role, histones H1 are necessary for the condensation of nucleosome chains into higher-order structures. This Oryctolagus cuniculus (Rabbit) protein is Histone H1.3.